Here is a 133-residue protein sequence, read N- to C-terminus: Small ribosomal subunit protein uS8 (133 aa).

The protein belongs to the universal ribosomal protein uS8 family. As to quaternary structure, part of the 30S ribosomal subunit. Contacts proteins S5 and S12.

One of the primary rRNA binding proteins, it binds directly to 16S rRNA central domain where it helps coordinate assembly of the platform of the 30S subunit. The protein is Small ribosomal subunit protein uS8 of Synechococcus sp. (strain CC9605).